Reading from the N-terminus, the 264-residue chain is uncharacterized protein (264 aa).

An N-terminal signal peptide occupies residues 1-22 (MIHSKKLTLGICLVLLIILIGG). A lipid anchor (N-palmitoyl cysteine) is attached at cysteine 23. A lipid anchor (S-diacylglycerol cysteine) is attached at cysteine 23.

This sequence belongs to the staphylococcal tandem lipoprotein family.

Its subcellular location is the cell membrane. This is an uncharacterized protein from Staphylococcus aureus (strain N315).